The primary structure comprises 179 residues: NADH-quinone oxidoreductase subunit B (179 aa).

Residues Cys35, Cys36, Cys100, and Cys129 each contribute to the [4Fe-4S] cluster site.

It belongs to the complex I 20 kDa subunit family. NDH-1 is composed of 14 different subunits. Subunits NuoB, C, D, E, F, and G constitute the peripheral sector of the complex. It depends on [4Fe-4S] cluster as a cofactor.

It is found in the cell inner membrane. The catalysed reaction is a quinone + NADH + 5 H(+)(in) = a quinol + NAD(+) + 4 H(+)(out). Its function is as follows. NDH-1 shuttles electrons from NADH, via FMN and iron-sulfur (Fe-S) centers, to quinones in the respiratory chain. Couples the redox reaction to proton translocation (for every two electrons transferred, four hydrogen ions are translocated across the cytoplasmic membrane), and thus conserves the redox energy in a proton gradient. The chain is NADH-quinone oxidoreductase subunit B from Aquifex aeolicus (strain VF5).